The primary structure comprises 52 residues: MASKNREIIKLKSTESSEMYWTVKNKRKTSGRLELKKYDRKLRKHVIFKEAK.

This sequence belongs to the bacterial ribosomal protein bL33 family.

This is Large ribosomal subunit protein bL33 from Chlamydia trachomatis serovar A (strain ATCC VR-571B / DSM 19440 / HAR-13).